A 212-amino-acid polypeptide reads, in one-letter code: Large ribosomal subunit protein uL3 (212 aa).

This sequence belongs to the universal ribosomal protein uL3 family. Part of the 50S ribosomal subunit. Forms a cluster with proteins L14 and L19.

One of the primary rRNA binding proteins, it binds directly near the 3'-end of the 23S rRNA, where it nucleates assembly of the 50S subunit. The protein is Large ribosomal subunit protein uL3 of Ruminiclostridium cellulolyticum (strain ATCC 35319 / DSM 5812 / JCM 6584 / H10) (Clostridium cellulolyticum).